Reading from the N-terminus, the 314-residue chain is NF-kappa-B inhibitor alpha (314 aa).

The tract at residues 1-39 is disordered; the sequence is MFQPAGHGQDWAMEGPRDGLKKERLVDDRHDSGLDSMKD. A compositionally biased stretch (basic and acidic residues) spans 15–39; it reads GPRDGLKKERLVDDRHDSGLDSMKD. Lys-21 participates in a covalent cross-link: Glycyl lysine isopeptide (Lys-Gly) (interchain with G-Cter in SUMO); alternate. Lys-21 is covalently cross-linked (Glycyl lysine isopeptide (Lys-Gly) (interchain with G-Cter in ubiquitin); alternate). Residue Lys-22 forms a Glycyl lysine isopeptide (Lys-Gly) (interchain with G-Cter in ubiquitin) linkage. Positions 30–36 match the Destruction motif motif; the sequence is HDSGLDS. Ser-32 carries the phosphoserine; by IKKA and IKKB modification. The residue at position 36 (Ser-36) is a Phosphoserine; by IKKA, IKKB, IKKE and TBK1. At Tyr-42 the chain carries Phosphotyrosine; by Tyr-kinases. The Nuclear export signal signature appears at 45–54; the sequence is MVKELREIRL. Residues 110–120 carry the Nuclear import signal motif; the sequence is LQQTPLHLAVI. 4 ANK repeats span residues 110–139, 143–172, 182–211, and 216–245; these read LQQTPLHLAVITNQPGIAEALLKAGCDPEL, RGNTPLHLACEQGCLASVAVLTQTCTPQHL, NGHTCLHLASIHGYLGIVEHLVTLGADVNA, and NGRTALHLAVDLQNPDLVSLLLKCGADVNR. Asn-210 and Asn-244 each carry (3S)-3-hydroxyasparagine; by HIF1AN. Residues Ser-283 and Ser-288 each carry the phosphoserine; by CK2 modification. Thr-291 is modified (phosphothreonine; by CK2). Phosphoserine; by CK2 is present on Ser-293. Position 296 is a phosphothreonine (Thr-296).

This sequence belongs to the NF-kappa-B inhibitor family. Interacts with RELA; the interaction requires the nuclear import signal. Part of a 70-90 kDa complex at least consisting of CHUK, IKBKB, NFKBIA, RELA, ELP1 and MAP3K14. Interacts with NKIRAS1 and NKIRAS2. Interacts with RWDD3; the interaction enhances sumoylation. Interacts with PRMT2. Interacts with PRKACA in platelets; this interaction is disrupted by thrombin and collagen. Interacts with MEFV. Interacts with DDRGK1; positively regulates NFKBIA phosphorylation and degradation. Interacts with HNRNPA2B1; the interaction may be mediated by the RRM2 domain of HNRNPA2B1, and HNRNPA2B1 may interact simultaneously with FAM76B and either NFKBIA or NFKBIE to form a complex. In terms of processing, phosphorylated at Ser-32 and Ser-36 by IKKA/CHUK and IKKB/IKBKB; disables inhibition of NF-kappa-B DNA-binding activity. Phosphorylation at positions 32 and 36 is prerequisite to recognition by the SCF(FBXW11) and SCF(BTRC) complexes, leading to polyubiquitination and subsequent degradation. Post-translationally, polyubiquitinated at Lys-21 and/or Lys-22 following phosphorylation at Ser-32 and Ser-36. Monoubiquitinated at Lys-21 and/or Lys-22 by UBE2D3. Ubiquitin chain elongation is then performed by CDC34 in cooperation with the SCF(FBXW11) E3 ligase complex, building ubiquitin chains from the UBE2D3-primed NFKBIA-linked ubiquitin. The resulting polyubiquitination leads to protein degradation. Also ubiquitinated by the SCF(BTRC) complex following stimulus-dependent phosphorylation at Ser-32 and Ser-36. Deubiquitinated by USP38, leading to NF-kappa-B inhibition. Sumoylated; sumoylation requires the presence of the nuclear import signal. Sumoylation blocks ubiquitination and proteasome-mediated degradation of the protein thereby increasing the protein stability. In terms of processing, hydroxylated by HIF1AN.

The protein localises to the cytoplasm. The protein resides in the nucleus. Functionally, inhibits the activity of dimeric NF-kappa-B/REL complexes by trapping REL (RELA/p65 and NFKB1/p50) dimers in the cytoplasm by masking their nuclear localization signals. On cellular stimulation by immune and pro-inflammatory responses, becomes phosphorylated promoting ubiquitination and degradation, enabling the dimeric RELA to translocate to the nucleus and activate transcription. The protein is NF-kappa-B inhibitor alpha (Nfkbia) of Rattus norvegicus (Rat).